Here is a 359-residue protein sequence, read N- to C-terminus: UDP-N-acetylglucosamine--N-acetylmuramyl-(pentapeptide) pyrophosphoryl-undecaprenol N-acetylglucosamine transferase (359 aa).

UDP-N-acetyl-alpha-D-glucosamine contacts are provided by residues 15–17 (SGG), Asn-127, Arg-164, Ser-192, Ile-246, 265–270 (ALTVSE), and Gln-290.

Belongs to the glycosyltransferase 28 family. MurG subfamily.

The protein resides in the cell membrane. It carries out the reaction di-trans,octa-cis-undecaprenyl diphospho-N-acetyl-alpha-D-muramoyl-L-alanyl-D-glutamyl-meso-2,6-diaminopimeloyl-D-alanyl-D-alanine + UDP-N-acetyl-alpha-D-glucosamine = di-trans,octa-cis-undecaprenyl diphospho-[N-acetyl-alpha-D-glucosaminyl-(1-&gt;4)]-N-acetyl-alpha-D-muramoyl-L-alanyl-D-glutamyl-meso-2,6-diaminopimeloyl-D-alanyl-D-alanine + UDP + H(+). It functions in the pathway cell wall biogenesis; peptidoglycan biosynthesis. Its function is as follows. Cell wall formation. Catalyzes the transfer of a GlcNAc subunit on undecaprenyl-pyrophosphoryl-MurNAc-pentapeptide (lipid intermediate I) to form undecaprenyl-pyrophosphoryl-MurNAc-(pentapeptide)GlcNAc (lipid intermediate II). This chain is UDP-N-acetylglucosamine--N-acetylmuramyl-(pentapeptide) pyrophosphoryl-undecaprenol N-acetylglucosamine transferase, found in Wigglesworthia glossinidia brevipalpis.